The following is a 286-amino-acid chain: Shikimate dehydrogenase (NADP(+)) (286 aa).

Shikimate-binding positions include 19–21 (SVS) and T66. The Proton acceptor role is filled by K70. Shikimate is bound by residues N91 and D106. NADP(+)-binding positions include 130-134 (GAGGS) and A225. Y227 contributes to the shikimate binding site. G248 lines the NADP(+) pocket.

The protein belongs to the shikimate dehydrogenase family. As to quaternary structure, homodimer.

It catalyses the reaction shikimate + NADP(+) = 3-dehydroshikimate + NADPH + H(+). Its pathway is metabolic intermediate biosynthesis; chorismate biosynthesis; chorismate from D-erythrose 4-phosphate and phosphoenolpyruvate: step 4/7. Functionally, involved in the biosynthesis of the chorismate, which leads to the biosynthesis of aromatic amino acids. Catalyzes the reversible NADPH linked reduction of 3-dehydroshikimate (DHSA) to yield shikimate (SA). This chain is Shikimate dehydrogenase (NADP(+)), found in Dehalococcoides mccartyi (strain CBDB1).